A 234-amino-acid polypeptide reads, in one-letter code: Adenosine 5'-phosphosulfate reductase (234 aa).

[4Fe-4S] cluster contacts are provided by C120, C121, C203, and C206. The active-site Nucleophile; cysteine thiosulfonate intermediate is the C229.

This sequence belongs to the PAPS reductase family. CysH subfamily. Requires [4Fe-4S] cluster as cofactor.

It localises to the cytoplasm. The enzyme catalyses [thioredoxin]-disulfide + sulfite + AMP + 2 H(+) = adenosine 5'-phosphosulfate + [thioredoxin]-dithiol. It participates in sulfur metabolism; hydrogen sulfide biosynthesis; sulfite from sulfate. Its function is as follows. Catalyzes the formation of sulfite from adenosine 5'-phosphosulfate (APS) using thioredoxin as an electron donor. This chain is Adenosine 5'-phosphosulfate reductase, found in Bacillus mycoides (strain KBAB4) (Bacillus weihenstephanensis).